Consider the following 290-residue polypeptide: ATP synthase gamma chain (290 aa).

The protein belongs to the ATPase gamma chain family. As to quaternary structure, F-type ATPases have 2 components, CF(1) - the catalytic core - and CF(0) - the membrane proton channel. CF(1) has five subunits: alpha(3), beta(3), gamma(1), delta(1), epsilon(1). CF(0) has three main subunits: a, b and c.

It is found in the cell inner membrane. In terms of biological role, produces ATP from ADP in the presence of a proton gradient across the membrane. The gamma chain is believed to be important in regulating ATPase activity and the flow of protons through the CF(0) complex. The chain is ATP synthase gamma chain from Erythrobacter litoralis (strain HTCC2594).